A 303-amino-acid polypeptide reads, in one-letter code: Carboxypeptidase B (303 aa).

In terms of domain architecture, Peptidase M14 spans 5–298; the sequence is SYHDYDEINA…EGVKVVANFV (294 aa). 2 residues coordinate Zn(2+): His-63 and Glu-66. Substrate contacts are provided by residues 63 to 66, Arg-118, and 136 to 137; these read HARE and NR. Zn(2+) is bound at residue His-189. Substrate is bound by residues 190–191 and Tyr-241; that span reads SY. Glu-264 acts as the Proton donor/acceptor in catalysis.

It belongs to the peptidase M14 family. It depends on Zn(2+) as a cofactor.

Its subcellular location is the secreted. It catalyses the reaction Preferential release of a C-terminal lysine or arginine amino acid.. In Astacus astacus (Noble crayfish), this protein is Carboxypeptidase B.